A 372-amino-acid chain; its full sequence is Probable arabinan endo-1,5-alpha-L-arabinosidase B (372 aa).

Residues 1 to 16 (MTVLVALFCLVTWTLC) form the signal peptide. Over residues 23–34 (STQGTQQPQQPE) the composition is skewed to low complexity. A disordered region spans residues 23 to 52 (STQGTQQPQQPEKTPHPHPQPEDAFPPTHA). The active-site Proton acceptor is the Asp59. Residue Asn120 is glycosylated (N-linked (GlcNAc...) asparagine). Glu252 serves as the catalytic Proton donor. Asn363 is a glycosylation site (N-linked (GlcNAc...) asparagine).

The protein belongs to the glycosyl hydrolase 43 family.

It localises to the secreted. It catalyses the reaction Endohydrolysis of (1-&gt;5)-alpha-arabinofuranosidic linkages in (1-&gt;5)-arabinans.. It participates in glycan metabolism; L-arabinan degradation. Endo-1,5-alpha-L-arabinanase involved in degradation of pectin. Its preferred substrate is linear 1,5-alpha-L-arabinan. This chain is Probable arabinan endo-1,5-alpha-L-arabinosidase B (abnB), found in Aspergillus fumigatus (strain ATCC MYA-4609 / CBS 101355 / FGSC A1100 / Af293) (Neosartorya fumigata).